The sequence spans 209 residues: Uracil phosphoribosyltransferase (209 aa).

Residues arginine 79, arginine 104, and 131–139 contribute to the 5-phospho-alpha-D-ribose 1-diphosphate site; that span reads TPVVATANT. Uracil contacts are provided by residues isoleucine 194 and 199-201; that span reads GDA. Aspartate 200 contacts 5-phospho-alpha-D-ribose 1-diphosphate.

Belongs to the UPRTase family. The cofactor is Mg(2+).

It carries out the reaction UMP + diphosphate = 5-phospho-alpha-D-ribose 1-diphosphate + uracil. Its pathway is pyrimidine metabolism; UMP biosynthesis via salvage pathway; UMP from uracil: step 1/1. Allosterically activated by GTP. Functionally, catalyzes the conversion of uracil and 5-phospho-alpha-D-ribose 1-diphosphate (PRPP) to UMP and diphosphate. The protein is Uracil phosphoribosyltransferase of Bradyrhizobium diazoefficiens (strain JCM 10833 / BCRC 13528 / IAM 13628 / NBRC 14792 / USDA 110).